We begin with the raw amino-acid sequence, 594 residues long: Potassium-transporting ATPase potassium-binding subunit (594 aa).

10 helical membrane-spanning segments follow: residues 3–23 (ADFL…APLL), 67–87 (AVAM…LQRL), 136–156 (ALTV…IALV), 179–199 (LYVL…QGVV), 287–307 (LEML…GEMV), 314–334 (VAIL…AAYF), 415–435 (GLYG…LMIG), 453–473 (VALV…VAVL), 519–539 (VLLG…ILAL), and 562–582 (LFVA…YVPA).

This sequence belongs to the KdpA family. The system is composed of three essential subunits: KdpA, KdpB and KdpC.

It localises to the cell inner membrane. In terms of biological role, part of the high-affinity ATP-driven potassium transport (or Kdp) system, which catalyzes the hydrolysis of ATP coupled with the electrogenic transport of potassium into the cytoplasm. This subunit binds the periplasmic potassium ions and delivers the ions to the membrane domain of KdpB through an intramembrane tunnel. This chain is Potassium-transporting ATPase potassium-binding subunit, found in Bordetella bronchiseptica (strain ATCC BAA-588 / NCTC 13252 / RB50) (Alcaligenes bronchisepticus).